The primary structure comprises 285 residues: Transcription factor JAMYB (285 aa).

2 consecutive HTH myb-type domains span residues 26 to 78 and 79 to 133; these read SAEL…LNYL and RPDV…QKHA. DNA-binding regions (H-T-H motif) lie at residues 54–78 and 106–129; these read WNALARAAGLKRTGKSCRLRWLNYL and WSKIAQHLPGRTDNEIKNYWRTRV.

It localises to the nucleus. Probable transcription factor that may be involved in the jasmonate-dependent defense responses to the rice blast fungus Magnaporthe oryzae. Does not seem to function in the salicylic acid-dependent signaling pathway. This Oryza sativa subsp. japonica (Rice) protein is Transcription factor JAMYB.